The primary structure comprises 425 residues: Enolase 2 (425 aa).

Residue Gln163 coordinates (2R)-2-phosphoglycerate. Glu205 acts as the Proton donor in catalysis. Mg(2+) is bound by residues Asp242, Glu285, and Asp312. The (2R)-2-phosphoglycerate site is built by Lys337, Arg366, Ser367, and Lys388. The active-site Proton acceptor is the Lys337.

It belongs to the enolase family. The cofactor is Mg(2+).

It is found in the cytoplasm. The protein localises to the secreted. The protein resides in the cell surface. It catalyses the reaction (2R)-2-phosphoglycerate = phosphoenolpyruvate + H2O. Its pathway is carbohydrate degradation; glycolysis; pyruvate from D-glyceraldehyde 3-phosphate: step 4/5. Its function is as follows. Catalyzes the reversible conversion of 2-phosphoglycerate (2-PG) into phosphoenolpyruvate (PEP). It is essential for the degradation of carbohydrates via glycolysis. This is Enolase 2 from Cupriavidus metallidurans (strain ATCC 43123 / DSM 2839 / NBRC 102507 / CH34) (Ralstonia metallidurans).